Consider the following 571-residue polypeptide: Cyclic di-GMP phosphodiesterase TpdA (571 aa).

The next 3 helical transmembrane spans lie at 155–175, 321–341, and 395–415; these read IAWV…YAIN, VYYI…FLVI, and TLIS…AIYA. One can recognise an EAL domain in the interval 344–571; the sequence is HRSLQAFITY…HQGYFYPLHF (228 aa).

Its subcellular location is the cell inner membrane. The catalysed reaction is 3',3'-c-di-GMP + H2O = 5'-phosphoguanylyl(3'-&gt;5')guanosine + H(+). Its function is as follows. Cyclic di-GMP phosphodiesterase that plays an important role in modulating the global c-di-GMP pool. Its ability to alter the c-di-GMP pool has an effect on swimming motility, swarming motility and biofilm formation, multicellular behaviors that are important for the survival and dissemination of this environmental pathogen. Exhibits a dual function, namely, c-di-GMP degradation and modulation of its own expression. The protein is Cyclic di-GMP phosphodiesterase TpdA of Vibrio parahaemolyticus serotype O3:K6 (strain RIMD 2210633).